Reading from the N-terminus, the 202-residue chain is Small ribosomal subunit protein uS2 (202 aa).

The protein belongs to the universal ribosomal protein uS2 family.

This chain is Small ribosomal subunit protein uS2 (rps2), found in Pyrococcus horikoshii (strain ATCC 700860 / DSM 12428 / JCM 9974 / NBRC 100139 / OT-3).